We begin with the raw amino-acid sequence, 253 residues long: DnaJ homolog subfamily C member 8 (253 aa).

Position 2 is an N-acetylalanine (Ala-2). Ser-35 carries the post-translational modification Phosphoserine. One can recognise a J domain in the interval 57–124 (NPFEVLQIDP…QKKRALDVIQ (68 aa)). Lys-146 bears the N6-acetyllysine mark. Residues 181 to 222 (EAKEMHERKRQREEEIEAQEKAKREREWQKNFEESRDGRVDS) are compositionally biased toward basic and acidic residues. Positions 181–253 (EAKEMHERKR…PPKVKMEQRE (73 aa)) are disordered. 2 consecutive short sequence motifs (nuclear localization signal) follow at residues 189 to 192 (KRQR) and 203 to 206 (KRER). Residue Ser-222 is modified to Phosphoserine. Positions 231-240 (KGKKEKKNRT) are enriched in basic residues. The essential for polyglutamine aggregation suppression stretch occupies residues 232 to 253 (GKKEKKNRTFLRPPKVKMEQRE).

As to quaternary structure, interacts with SRPK1. Interacts with HSP70 (HSPA1A or HSPA1B). In terms of tissue distribution, ubiquitous.

The protein resides in the nucleus. In terms of biological role, suppresses polyglutamine (polyQ) aggregation of ATXN3 in neuronal cells. This is DnaJ homolog subfamily C member 8 (DNAJC8) from Homo sapiens (Human).